We begin with the raw amino-acid sequence, 138 residues long: Large ribosomal subunit protein uL16c (138 aa).

A disordered region spans residues 1–21; the sequence is MLSPQKTKFRKQHRGRMKGVS. A compositionally biased stretch (basic residues) spans 7-21; sequence TKFRKQHRGRMKGVS.

The protein belongs to the universal ribosomal protein uL16 family. Part of the 50S ribosomal subunit.

It is found in the plastid. It localises to the chloroplast. This is Large ribosomal subunit protein uL16c from Cycas taitungensis (Prince sago).